The primary structure comprises 683 residues: DNA ligase (683 aa).

Residues 36–40 (DAVYD), 85–86 (SL), and Glu121 contribute to the NAD(+) site. Residue Lys123 is the N6-AMP-lysine intermediate of the active site. Residues Arg144, Glu180, Lys296, and Lys320 each coordinate NAD(+). Zn(2+) is bound by residues Cys413, Cys416, Cys431, and Cys437. Positions 605–683 (PSEGHLSGKV…ESGWRVLAGL (79 aa)) constitute a BRCT domain.

It belongs to the NAD-dependent DNA ligase family. LigA subfamily. Requires Mg(2+) as cofactor. The cofactor is Mn(2+).

It carries out the reaction NAD(+) + (deoxyribonucleotide)n-3'-hydroxyl + 5'-phospho-(deoxyribonucleotide)m = (deoxyribonucleotide)n+m + AMP + beta-nicotinamide D-nucleotide.. Functionally, DNA ligase that catalyzes the formation of phosphodiester linkages between 5'-phosphoryl and 3'-hydroxyl groups in double-stranded DNA using NAD as a coenzyme and as the energy source for the reaction. It is essential for DNA replication and repair of damaged DNA. This chain is DNA ligase, found in Gluconobacter oxydans (strain 621H) (Gluconobacter suboxydans).